A 296-amino-acid chain; its full sequence is Prostate androgen-regulated mucin-like protein 1 homolog (296 aa).

An N-terminal signal peptide occupies residues 1-20; the sequence is MVCKALITLCIFAAGLRVQG. Topologically, residues 21–244 are extracellular; it reads SPTPTLLPVS…EVENALSSGS (224 aa). Asparagine 62, asparagine 96, and asparagine 108 each carry an N-linked (GlcNAc...) asparagine glycan. The disordered stretch occupies residues 73–220; it reads LTSQLPTHPR…SPQDTEPGKV (148 aa). The segment covering 80–96 has biased composition (basic and acidic residues); the sequence is HPREEAVTSPPLKREVN. Positions 97–111 are enriched in low complexity; that stretch reads STDSSPTGFSSNSSG. Polar residues predominate over residues 125 to 145; it reads SPETSVPATGSQSPTLLFSQG. Low complexity-rich tracts occupy residues 146-175 and 195-205; these read PTSA…TVNN and SHTPTSHVTEP. Asparagine 168 carries an N-linked (GlcNAc...) asparagine glycan. Residues 206–217 are compositionally biased toward basic and acidic residues; it reads VPKEKSPQDTEP. A helical membrane pass occupies residues 245-265; it reads IAAITVTVIAVVLLVFGAAAY. The Cytoplasmic segment spans residues 266-296; sequence LKIRHSSYGRLLDDHDYGSWGNYNNPLYDDS. Serine 284 is modified (phosphoserine).

The protein belongs to the PARM family. Post-translationally, highly N-glycosylated and O-glycosylated. In terms of tissue distribution, expressed in prostate. Detected in other organs at low levels, these include the heart and various tissues of the urogenital tract. Not detected in mammary gland.

It localises to the cell membrane. The protein resides in the golgi apparatus membrane. It is found in the endosome membrane. Its function is as follows. May regulate TLP1 expression and telomerase activity, thus enabling certain prostatic cells to resist apoptosis. This is Prostate androgen-regulated mucin-like protein 1 homolog (Parm1) from Rattus norvegicus (Rat).